Here is a 178-residue protein sequence, read N- to C-terminus: TM2 domain-containing protein biscotti (178 aa).

Positions 1–18 (MFPVLLLLLFFFAKETHQ) are cleaved as a signal peptide. The Extracellular segment spans residues 19 to 99 (INVDCNELQM…YHLDTTLLLS (81 aa)). Asn69 and Asn75 each carry an N-linked (GlcNAc...) asparagine glycan. A TM2 domain is found at 94–137 (TTLLLSVFLGMFGVDRFYLGYPGIGLLKFCTLGGMFLGQLIDIV). Residues 100-120 (VFLGMFGVDRFYLGYPGIGLL) traverse the membrane as a helical segment. The Cytoplasmic segment spans residues 121–124 (KFCT). A helical transmembrane segment spans residues 125–145 (LGGMFLGQLIDIVLIALQVVG). Residues 146 to 178 (PADGSAYVIPYYGAGIHIVRSDNTTYRLPRDDW) lie on the Extracellular side of the membrane. N-linked (GlcNAc...) asparagine glycosylation is present at Asn168.

This sequence belongs to the TM2 family.

It localises to the membrane. In terms of biological role, positive regulator of Notch signaling. Maternal neurogenic factor involved in Notch signaling-dependent neuroectodermal specification during early embryogenesis. Functions cooperatively with amx/TM2D3 and amrt/TM2D2. This chain is TM2 domain-containing protein biscotti, found in Drosophila melanogaster (Fruit fly).